We begin with the raw amino-acid sequence, 394 residues long: QWRF motif-containing protein 7 (394 aa).

The disordered stretch occupies residues 1-171 (MATTGRRLRP…ESPVSKAKIR (171 aa)). Residues 14-67 (NNNRSRTISSSISLPVSLNASLSSSTSSSSSSSPSNSSKRVMITRSQSTTRSSR) are compositionally biased toward low complexity. Residues 85–96 (NSASRSQEINNG) show a composition bias toward polar residues. Over residues 97–110 (RSRESFARYLEQRT) the composition is skewed to basic and acidic residues. Polar residues-rich tracts occupy residues 111-120 (RGSPRSNASS) and 142-157 (TMKT…TSMC). Residues 211-214 (QWRF) carry the QWRF motif motif.

This sequence belongs to the QWRF family.

This chain is QWRF motif-containing protein 7 (QWRF7), found in Arabidopsis thaliana (Mouse-ear cress).